The sequence spans 534 residues: CTP synthase (534 aa).

The tract at residues 1–267 is amidoligase domain; the sequence is MTKYIFVTGG…DQIVCDHLKL (267 aa). Residue serine 13 coordinates CTP. Serine 13 lines the UTP pocket. 14 to 19 contributes to the ATP binding site; it reads SIGKGI. Position 54 (tyrosine 54) interacts with L-glutamine. Aspartate 71 serves as a coordination point for ATP. Mg(2+) is bound by residues aspartate 71 and glutamate 141. CTP is bound by residues 148-150, 188-193, and lysine 224; these read DIE and KTKPTQ. UTP is bound by residues 188–193 and lysine 224; that span reads KTKPTQ. 240-242 contributes to the ATP binding site; sequence RDV. Residues 292 to 534 form the Glutamine amidotransferase type-1 domain; the sequence is KIALVGKYVE…FVTAAIKNSN (243 aa). Glycine 354 provides a ligand contact to L-glutamine. Cysteine 381 serves as the catalytic Nucleophile; for glutamine hydrolysis. L-glutamine contacts are provided by residues 382–385, glutamate 405, and arginine 463; that span reads LGMQ. Active-site residues include histidine 508 and glutamate 510.

Belongs to the CTP synthase family. In terms of assembly, homotetramer.

It carries out the reaction UTP + L-glutamine + ATP + H2O = CTP + L-glutamate + ADP + phosphate + 2 H(+). The enzyme catalyses L-glutamine + H2O = L-glutamate + NH4(+). It catalyses the reaction UTP + NH4(+) + ATP = CTP + ADP + phosphate + 2 H(+). Its pathway is pyrimidine metabolism; CTP biosynthesis via de novo pathway; CTP from UDP: step 2/2. Its activity is regulated as follows. Allosterically activated by GTP, when glutamine is the substrate; GTP has no effect on the reaction when ammonia is the substrate. The allosteric effector GTP functions by stabilizing the protein conformation that binds the tetrahedral intermediate(s) formed during glutamine hydrolysis. Inhibited by the product CTP, via allosteric rather than competitive inhibition. Its function is as follows. Catalyzes the ATP-dependent amination of UTP to CTP with either L-glutamine or ammonia as the source of nitrogen. Regulates intracellular CTP levels through interactions with the four ribonucleotide triphosphates. This chain is CTP synthase, found in Streptococcus pyogenes serotype M4 (strain MGAS10750).